The chain runs to 193 residues: Proteasome subunit beta 1 (193 aa).

A propeptide spans 1–4 (MPGA) (removed in mature form; by autocatalysis). Threonine 5 serves as the catalytic Nucleophile.

Belongs to the peptidase T1B family. As to quaternary structure, the 20S proteasome core is composed of 14 alpha and 14 beta subunits that assemble into four stacked heptameric rings, resulting in a barrel-shaped structure. The two inner rings, each composed of seven catalytic beta subunits, are sandwiched by two outer rings, each composed of seven alpha subunits. The catalytic chamber with the active sites is on the inside of the barrel. Has a gated structure, the ends of the cylinder being occluded by the N-termini of the alpha-subunits. Is capped at one or both ends by the proteasome regulatory ATPase, PAN.

The protein resides in the cytoplasm. The enzyme catalyses Cleavage of peptide bonds with very broad specificity.. Its activity is regulated as follows. The formation of the proteasomal ATPase PAN-20S proteasome complex, via the docking of the C-termini of PAN into the intersubunit pockets in the alpha-rings, triggers opening of the gate for substrate entry. Interconversion between the open-gate and close-gate conformations leads to a dynamic regulation of the 20S proteasome proteolysis activity. In terms of biological role, component of the proteasome core, a large protease complex with broad specificity involved in protein degradation. The sequence is that of Proteasome subunit beta 1 from Cenarchaeum symbiosum (strain A).